Reading from the N-terminus, the 212-residue chain is MIVIFLGPPGAGKGTQGKKIAKKIDLPHIAIGDIFRTIIKTSTSEAELINNYVRQGELIPNEIVNQVIKNFLLSFEYKNGYILDGYPRNLEQAQFFESFIKEKIKIIYFDVSGELLIKRILGRYSCKNCGKIYNRYFLQPKTDNVCDVCGSSTFDYRKDDNEEVIKKRIEVYKTETYPLIDYYKNSGNFYIVNGSKNEQEIAMDIQKILKIN.

10–15 (GAGKGT) lines the ATP pocket. The tract at residues 30–59 (AIGDIFRTIIKTSTSEAELINNYVRQGELI) is NMP. AMP is bound by residues R36, 57 to 59 (ELI), 85 to 88 (GYPR), and Q92. Positions 122–160 (GRYSCKNCGKIYNRYFLQPKTDNVCDVCGSSTFDYRKDD) are LID. Position 123 (R123) interacts with ATP. Zn(2+) contacts are provided by C126 and C129. 132–133 (IY) is a binding site for ATP. C146 and C149 together coordinate Zn(2+). Residues R157 and R168 each contribute to the AMP site. K196 contributes to the ATP binding site.

The protein belongs to the adenylate kinase family. As to quaternary structure, monomer.

It is found in the cytoplasm. The enzyme catalyses AMP + ATP = 2 ADP. It functions in the pathway purine metabolism; AMP biosynthesis via salvage pathway; AMP from ADP: step 1/1. Functionally, catalyzes the reversible transfer of the terminal phosphate group between ATP and AMP. Plays an important role in cellular energy homeostasis and in adenine nucleotide metabolism. This Rickettsia rickettsii (strain Iowa) protein is Adenylate kinase.